Here is an 819-residue protein sequence, read N- to C-terminus: MADKLALPLLLPCTPSSKPYSHDQNHHISRTPFLTTSLSSPPPPPVEPLLHDVFLHQNPNSRQPISSQTSRNRNRTRIGKSRDPNLGKPWSYHGLSPQGQQVLRSLIEPNFDSGQLDSVLSELFEPFKDKPESTSSELLAFLKGLGFHKKFDLALRAFDWFMKQKDYQSMLDNSVVAIIISMLGKEGRVSSAANMFNGLQEDGFSLDVYSYTSLISAFANSGRYREAVNVFKKMEEDGCKPTLITYNVILNVFGKMGTPWNKITSLVEKMKSDGIAPDAYTYNTLITCCKRGSLHQEAAQVFEEMKAAGFSYDKVTYNALLDVYGKSHRPKEAMKVLNEMVLNGFSPSIVTYNSLISAYARDGMLDEAMELKNQMAEKGTKPDVFTYTTLLSGFERAGKVESAMSIFEEMRNAGCKPNICTFNAFIKMYGNRGKFTEMMKIFDEINVCGLSPDIVTWNTLLAVFGQNGMDSEVSGVFKEMKRAGFVPERETFNTLISAYSRCGSFEQAMTVYRRMLDAGVTPDLSTYNTVLAALARGGMWEQSEKVLAEMEDGRCKPNELTYCSLLHAYANGKEIGLMHSLAEEVYSGVIEPRAVLLKTLVLVCSKCDLLPEAERAFSELKERGFSPDITTLNSMVSIYGRRQMVAKANGVLDYMKERGFTPSMATYNSLMYMHSRSADFGKSEEILREILAKGIKPDIISYNTVIYAYCRNTRMRDASRIFSEMRNSGIVPDVITYNTFIGSYAADSMFEEAIGVVRYMIKHGCRPNQNTYNSIVDGYCKLNRKDEAKLFVEDLRNLDPHAPKGEDLRLLERIVKKWP.

The segment at 57-93 is disordered; the sequence is QNPNSRQPISSQTSRNRNRTRIGKSRDPNLGKPWSYH. PPR repeat units follow at residues 172–206, 207–241, 242–277, 278–312, 313–347, 348–382, 383–417, 418–452, 453–487, 488–522, 523–557, 558–592, 593–627, 628–662, 663–697, 698–732, 733–767, and 768–802; these read DNSV…GFSL, DVYS…GCKP, TLIT…GIAP, DAYT…GFSY, DKVT…GFSP, SIVT…GTKP, DVFT…GCKP, NICT…GLSP, DIVT…GFVP, ERET…GVTP, DLST…RCKP, NELT…VIEP, RAVL…GFSP, DITT…GFTP, SMAT…GIKP, DIIS…GIVP, DVIT…GCRP, and NQNT…DPHA.

Belongs to the PPR family. P subfamily.

This Arabidopsis thaliana (Mouse-ear cress) protein is Pentatricopeptide repeat-containing protein At5g02860.